A 421-amino-acid chain; its full sequence is ATP-dependent RNA helicase RhlB (421 aa).

Residues 9 to 37 carry the Q motif motif; it reads QKFSDFSLHPKVVEALEKKGFHNCTPIQA. A Helicase ATP-binding domain is found at 40-219; the sequence is LPLTLAGRDV…FEQMNNAEYI (180 aa). 53 to 60 contacts ATP; it reads AQTGTGKT. The short motif at 165 to 168 is the DEAD box element; the sequence is DEAD. A Helicase C-terminal domain is found at 245–390; the sequence is RLLQTLIEEE…VSKYNPDALM (146 aa). The segment at 392–421 is disordered; sequence DLPKPLRLTRPRTGNGPRRTGAPRNRRRSG. Low complexity predominate over residues 402-414; the sequence is PRTGNGPRRTGAP.

The protein belongs to the DEAD box helicase family. RhlB subfamily. Component of the RNA degradosome, which is a multiprotein complex involved in RNA processing and mRNA degradation.

It localises to the cytoplasm. It carries out the reaction ATP + H2O = ADP + phosphate + H(+). In terms of biological role, DEAD-box RNA helicase involved in RNA degradation. Has RNA-dependent ATPase activity and unwinds double-stranded RNA. This chain is ATP-dependent RNA helicase RhlB, found in Shigella dysenteriae serotype 1 (strain Sd197).